A 457-amino-acid chain; its full sequence is 3-ketoacyl-CoA thiolase 5, peroxisomal (457 aa).

The transit peptide at 1–37 (MERAMERQKILLRHLNPVSSSNSSLKHEPSLLSPVNC) directs the protein to the peroxisome. Cys-137 (acyl-thioester intermediate) is an active-site residue. Residues His-394 and Cys-426 each act as proton acceptor in the active site.

It belongs to the thiolase-like superfamily. Thiolase family. Homodimer. As to expression, expressed in seedlings and wounded leaves.

The protein localises to the peroxisome. The enzyme catalyses an acyl-CoA + acetyl-CoA = a 3-oxoacyl-CoA + CoA. Its pathway is lipid metabolism; fatty acid metabolism. Probably involved in long chain fatty-acid beta-oxidation prior to gluconeogenesis during germination and subsequent seedling growth. Involved in systemic jasmonic acid (JA) biosynthesis after wounding and may be during senescence. This is 3-ketoacyl-CoA thiolase 5, peroxisomal (KAT5) from Arabidopsis thaliana (Mouse-ear cress).